Here is an 81-residue protein sequence, read N- to C-terminus: Short neurotoxin B (81 aa).

The signal sequence occupies residues 1–21 (MKTLLLTLVVVTIVCLDLGYT). 4 disulfides stabilise this stretch: Cys-24–Cys-43, Cys-38–Cys-60, Cys-62–Cys-73, and Cys-74–Cys-79.

Belongs to the three-finger toxin family. Short-chain subfamily. Type I alpha-neurotoxin sub-subfamily. In terms of tissue distribution, expressed by the venom gland.

The protein localises to the secreted. Its function is as follows. Binds to muscle nicotinic acetylcholine receptor (nAChR) and inhibit acetylcholine from binding to the receptor, thereby impairing neuromuscular transmission. This chain is Short neurotoxin B, found in Aipysurus laevis (Olive sea snake).